Reading from the N-terminus, the 91-residue chain is Mercuric transport protein periplasmic component (91 aa).

Positions 1 to 19 (MKKLFASLAIAAVVAPVWA) are cleaved as a signal peptide. Positions 22–88 (QTVTLSVPGM…ATEDAGYPSS (67 aa)) constitute an HMA domain. Positions 33 and 36 each coordinate Hg(2+).

This sequence belongs to the MerP family. In terms of assembly, monomer.

Its subcellular location is the periplasm. Its function is as follows. Involved in mercury resistance. Acts as a mercury scavenger that specifically binds to a mercuric ion in the periplasm and probably passes it to the cytoplasmic mercuric reductase MerA via the mercuric transport protein MerT. The chain is Mercuric transport protein periplasmic component from Serratia marcescens.